The chain runs to 276 residues: Undecaprenyl-diphosphatase 2 (276 aa).

8 helical membrane passes run 1–21 (MSLW…LFPV), 44–64 (QLLP…LWYF), 87–107 (GHLM…GLLL), 114–134 (VFHD…LLWL), 150–170 (MTFK…IPGF), 190–210 (AAEF…VLEL), 222–242 (DALL…RFLM), and 251–271 (LASF…WFML).

Belongs to the UppP family.

The protein localises to the cell inner membrane. The catalysed reaction is di-trans,octa-cis-undecaprenyl diphosphate + H2O = di-trans,octa-cis-undecaprenyl phosphate + phosphate + H(+). Catalyzes the dephosphorylation of undecaprenyl diphosphate (UPP). Confers resistance to bacitracin. The chain is Undecaprenyl-diphosphatase 2 from Burkholderia orbicola (strain AU 1054).